The chain runs to 100 residues: Urease subunit gamma (100 aa).

It belongs to the urease gamma subunit family. Heterotrimer of UreA (gamma), UreB (beta) and UreC (alpha) subunits. Three heterotrimers associate to form the active enzyme.

The protein localises to the cytoplasm. The catalysed reaction is urea + 2 H2O + H(+) = hydrogencarbonate + 2 NH4(+). It participates in nitrogen metabolism; urea degradation; CO(2) and NH(3) from urea (urease route): step 1/1. This Rhizobium leguminosarum bv. viciae protein is Urease subunit gamma.